The chain runs to 162 residues: Protein LTO1 (162 aa).

A deca-GX3 motif; required for interaction with YAE1 and the CIA complex region spans residues 17-53 (GFLEGQNENIKQSFLEGKQYGLQVGFQRFTLLGQMEG).

Belongs to the LTO1 family. In terms of assembly, forms a complex with YAE1; the complex bridges the interaction between the CIA complex and RLI1. Associates with the CIA complex (via its C-terminal tryptophan).

Its subcellular location is the nucleus. Functionally, essential for life in oxygen, but nonessential under anaerobic conditions. Required for biogenesis of the large ribosomal subunit and initiation of translation in oxygen. The complex LTO1:YAE1 functions as a target specific adapter that recruits apo-RLI1 to the cytosolic iron-sulfur protein assembly (CIA) complex machinery. The sequence is that of Protein LTO1 from Saccharomyces cerevisiae (strain ATCC 204508 / S288c) (Baker's yeast).